The sequence spans 72 residues: Translation initiation factor IF-1 (72 aa).

Residues Met-1 to Lys-72 enclose the S1-like domain.

The protein belongs to the IF-1 family. Component of the 30S ribosomal translation pre-initiation complex which assembles on the 30S ribosome in the order IF-2 and IF-3, IF-1 and N-formylmethionyl-tRNA(fMet); mRNA recruitment can occur at any time during PIC assembly.

The protein localises to the cytoplasm. In terms of biological role, one of the essential components for the initiation of protein synthesis. Stabilizes the binding of IF-2 and IF-3 on the 30S subunit to which N-formylmethionyl-tRNA(fMet) subsequently binds. Helps modulate mRNA selection, yielding the 30S pre-initiation complex (PIC). Upon addition of the 50S ribosomal subunit IF-1, IF-2 and IF-3 are released leaving the mature 70S translation initiation complex. In Campylobacter hominis (strain ATCC BAA-381 / DSM 21671 / CCUG 45161 / LMG 19568 / NCTC 13146 / CH001A), this protein is Translation initiation factor IF-1.